The following is a 391-amino-acid chain: Tryptophan synthase beta chain 2 (391 aa).

Lys-83 is subject to N6-(pyridoxal phosphate)lysine.

Belongs to the TrpB family. Tetramer of two alpha and two beta chains. The cofactor is pyridoxal 5'-phosphate.

It catalyses the reaction (1S,2R)-1-C-(indol-3-yl)glycerol 3-phosphate + L-serine = D-glyceraldehyde 3-phosphate + L-tryptophan + H2O. The protein operates within amino-acid biosynthesis; L-tryptophan biosynthesis; L-tryptophan from chorismate: step 5/5. In terms of biological role, the beta subunit is responsible for the synthesis of L-tryptophan from indole and L-serine. The sequence is that of Tryptophan synthase beta chain 2 (trpB2) from Chlamydia caviae (strain ATCC VR-813 / DSM 19441 / 03DC25 / GPIC) (Chlamydophila caviae).